Here is a 226-residue protein sequence, read N- to C-terminus: MDILIISLKSLGYSRTHKSLDSGPLVVHAVAGAGKSTALRKLILRHPTFTVHTLGVPDKVSIRTRGIQKPGPIPEGNFAILDEYTLDNTTRNSYQALFADPYQAPEFSLEPHFYLETSFRVPRKVADLIAGCGFDFETNSQEEGHLEITGIFKGPLLGKVIAIDEESETTLSKHGVEFVKPCQVTGLEFKVVTVVSAAPIEEIGQSTAFYNAITRSKGLTYVRAGT.

In terms of domain architecture, (+)RNA virus helicase ATP-binding spans 1 to 115; that stretch reads MDILIISLKS…EFSLEPHFYL (115 aa). A (+)RNA virus helicase C-terminal domain is found at 116 to 226; that stretch reads ETSFRVPRKV…KGLTYVRAGT (111 aa).

Belongs to the Tymovirales TGBp1 protein family. In terms of assembly, homodimer and homooligomer. Interacts with capsid protein. Interacts with host AGO1; this interaction targets the host protein for degradation, thereby suppressing the antiviral RNA silencing.

The protein localises to the host cytoplasm. Functionally, transports viral genome to neighboring plant cells directly through plasmosdesmata, without any budding. The movement protein allows efficient cell to cell propagation, by bypassing the host cell wall barrier. Increases plasmodesma size exclusion limit. Acts as a suppressor of RNA-mediated gene silencing, also known as post-transcriptional gene silencing (PTGS), a mechanism of plant viral defense that limits the accumulation of viral RNAs. The chain is Movement and silencing protein TGBp1 from Brassica campestris (Field mustard).